Reading from the N-terminus, the 534-residue chain is MAKIDLSKYGITGATEIVYNPSYELLFEEETKSTNEGYEVGKESELGAVDVMTGIYTGRSPKDKYIVVDENSKDTVWWTSDEYKNDNHPMSEDVWAKVKDIAKAELSNKKLFVVDAFCGANKDTRMAVRFIVEVAWQAHFVTNMFIKPTAEELENFEPDFVVYNASKAKVENYAELGLNSETCVAFNITSHEQVIINTWYGGEMKKGMFSMMNYYLPLKGIASMHCSANTDKNGENTAIFFGLSGTGKTTLSTDPKRLLIGDDEHGWDDNGVFNFEGGCYAKVINLDKDSEPDIYNAIKRNALLENVTLDENGKIDFADKSVTENTRVSYPINHIENIVRPISSAPAAKNVIFLSADAFGVLPPVSILTPEQTQYYFLSGFTAKLAGTERGITEPTPTFSACFGQAFLELHPTKYAAELVKKMEKSGAKAYLVNTGWNGTGKRISIKDTRGIIDAILSGAINTAPTKKIPMFNFEVPTELPGVDPAILDPRDTYADASEWETKAKDLAARFNKNFVKYTGNEAGKALVAAGPQL.

3 residues coordinate substrate: Arg-59, Tyr-200, and Lys-206. Residues Lys-206, His-225, and 242–250 (GLSGTGKTT) each bind ATP. Residues Lys-206 and His-225 each coordinate Mn(2+). Residue Asp-263 participates in Mn(2+) binding. ATP-binding positions include Glu-291, Arg-327, 443–444 (RI), and Thr-449. Arg-327 is a substrate binding site.

The protein belongs to the phosphoenolpyruvate carboxykinase (ATP) family. It depends on Mn(2+) as a cofactor.

It is found in the cytoplasm. The enzyme catalyses oxaloacetate + ATP = phosphoenolpyruvate + ADP + CO2. Its pathway is carbohydrate biosynthesis; gluconeogenesis. Involved in the gluconeogenesis. Catalyzes the conversion of oxaloacetate (OAA) to phosphoenolpyruvate (PEP) through direct phosphoryl transfer between the nucleoside triphosphate and OAA. This is Phosphoenolpyruvate carboxykinase (ATP) from Lachnospira eligens (strain ATCC 27750 / DSM 3376 / VPI C15-48 / C15-B4) (Eubacterium eligens).